The following is a 256-amino-acid chain: MVLISVLASLLVLQLSYAQKSSELVIGGAECNINEHRSLVLLYNSSRLFGGGTLINKEWVLSAAHCDGENMKIYLGLHHFRLPNKDRQIRVAKEKYFCRDRKSIVDKDIMLIKLNKPVNNSTHIAPLSLPSSPPSVGSDCRIMGWGTITSPNDTYPKVPHCANINILEHSLCERAYNDLSASSRTLCAGIEKGGIDTCKGDSGGPLICNGQIQGIVSWGDEVCGKPNKPGVYTKVFDYTDWIRNIIAGNTAATCPQ.

The first 18 residues, 1–18 (MVLISVLASLLVLQLSYA), serve as a signal peptide directing secretion. Positions 19–24 (QKSSEL) are excised as a propeptide. The Peptidase S1 domain occupies 25–247 (VIGGAECNIN…YTDWIRNIIA (223 aa)). Cystine bridges form between C31–C161, C98–C254, C140–C208, C172–C187, and C198–C223. N44 carries an N-linked (GlcNAc...) asparagine glycan. Active-site charge relay system residues include H65 and D108. N-linked (GlcNAc...) asparagine glycosylation is found at N119, N120, and N152. Catalysis depends on S202, which acts as the Charge relay system.

The protein belongs to the peptidase S1 family. Snake venom subfamily. Monomer. In terms of tissue distribution, expressed by the venom gland.

It is found in the secreted. Its platelets aggregating activity is inhibited by chlorpromazine, theophylline mepacrine. Its platelet aggregating activity and its amidolytic activity are inhibited by PMSF, TPCK, TLCK and soybean trypsin inhibitors. Is unaffected by hirudin or by antithrombin-III in the presence of heparin. Thrombin-like snake venom serine protease which potently induces platelet aggregation and has fibrinogenolytic activities. Clots purified fibrinogen and hydrolyzes alpha-chains (FGA). High concentrations of this enzyme also cleave prothrombin (F2) and factor X (F10). Is also able to activate factor XIII (F8). The protein is Thrombin-like enzyme cerastocytin of Cerastes cerastes (Horned desert viper).